Reading from the N-terminus, the 88-residue chain is Chaplin-F (88 aa).

The first 36 residues, 1–36 (MYNPKEHFSMSRIAKGLALTSVAAAAVAGTAGVAAA), serve as a signal peptide directing secretion. The region spanning 47–87 (SPGVLSGNVVQVPVHIPVNVCGNTIDVIGLLNPAFGNECEN) is the Chaplin domain. Residues cysteine 67 and cysteine 85 are joined by a disulfide bond.

Belongs to the chaplin family. Short chaplin subfamily. As to quaternary structure, homodimer; disulfide linked. About 20% of ChpF isolated from cell wall forms disulfide-bonded homodimers.

The protein resides in the cell surface. It localises to the secreted. Its subcellular location is the cell wall. It is found in the fimbrium. Functionally, one of 8 partially redundant surface-active proteins required for efficient formation of aerial mycelium; the short chaplins assemble into a hydrophobic, amyloidal fibrillar surface layer that envelopes and protects aerial hyphae and spores, presumably anchored to the long chaplins. Chaplins have an overlapping function with the surface-active SapB peptide; chaplins are essential on minimal medium while on rich medium both chaplins and SapB are required for efficient aerial hyphae formation. Chaplins are also involved in cell attachment to a hydrophobic surface. Forms amyloid fibrils in vitro probably composed of stacked beta-sheets, at low extracellular concentrations individually restores the ability to form aerial hyphae to a chaplin-deficient strain. A small chaplin extract (ChpD, ChpE, ChpF, ChpG and ChpH) self-assembles into 2 different amyloids; small fibrils at the air-water interface form an amphipathic membrane that resembles spore-surface structures involved in aerial hyphae formation, and hydrophilic fibrils in solution that resemble the fibers that attach cells to a hydrophobic surface. At the air-water interface the hydrophilic surface is in contact with water (probably equivalent to the peptidoglycan layer), while the hydrophobic face is exposed to the air, making the surface of the aerial hyphae hydrophobic. A small chaplin extract applied to a chaplin-deficient strain restores aerial hyphae formation. The small chaplin extract forms an amyloid-like structure similar to that seen on the surface of cells without rodlets (rdlA-rdlB deletions), and is highly surface active, reducing surface tension from 72 to 26 mJ/m(2), which probably allows escape of hyphae from an aqueous environment into air. ChpF alone is less surface active at pH 3.0 than at pH 10.0, it reduces the surface tension of water from 72.8 mN/m to 50 mN/m at pH 3.0 or to 37 mN/m at pH 10.0. ChpF and ChpG are sufficient to restore the rodlet layer and hydrophobicity to a strain deleted for the other 6 chaplin genes. In Streptomyces coelicolor (strain ATCC BAA-471 / A3(2) / M145), this protein is Chaplin-F.